Consider the following 704-residue polypeptide: Inhibitor of carbonic anhydrase (704 aa).

The first 19 residues, 1 to 19 (MRLAFCVLLCAGSLGLCLA), serve as a signal peptide directing secretion. Transferrin-like domains lie at 25 to 347 (VRWC…HLRR) and 357 to 689 (VMWC…NVRQ). Cystine bridges form between cysteine 28–cysteine 67, cysteine 38–cysteine 58, cysteine 137–cysteine 213, cysteine 172–cysteine 188, cysteine 175–cysteine 196, cysteine 185–cysteine 198, cysteine 246–cysteine 260, cysteine 360–cysteine 392, cysteine 370–cysteine 383, cysteine 417–cysteine 699, cysteine 440–cysteine 662, cysteine 472–cysteine 549, cysteine 496–cysteine 690, cysteine 506–cysteine 520, cysteine 517–cysteine 532, and cysteine 589–cysteine 603. A glycan (N-linked (GlcNAc...) asparagine) is linked at asparagine 491.

Belongs to the transferrin family. In terms of assembly, monomer. Interacts (via transferrin-like domain 2) with CA2. In terms of processing, N-glycosylated. Blood plasma (at protein level).

It is found in the secreted. Inhibitor for carbonic anhydrase 2 (CA2). Does not bind iron ions. This is Inhibitor of carbonic anhydrase from Sus scrofa (Pig).